The chain runs to 384 residues: Geranylgeranyl pyrophosphate synthase (384 aa).

Disordered regions lie at residues 1–25 and 39–78; these read MVPNANSNTVSLQSPNAIPPRTSST and RPVPESDWLGQNNTRNRSSSTTAIPLTGMHATGPQDPARY. Residues 47–62 are compositionally biased toward polar residues; that stretch reads LGQNNTRNRSSSTTAI. Residues lysine 112, arginine 115, and histidine 144 each coordinate isopentenyl diphosphate. Mg(2+)-binding residues include aspartate 151 and aspartate 155. Arginine 160 contacts dimethylallyl diphosphate. Arginine 161 is an isopentenyl diphosphate binding site. Dimethylallyl diphosphate is bound by residues lysine 238, threonine 239, and glutamine 272. Residue aspartate 275 coordinates Mg(2+). Positions 279, 289, and 299 each coordinate dimethylallyl diphosphate.

It belongs to the FPP/GGPP synthase family. Mg(2+) serves as cofactor.

It catalyses the reaction isopentenyl diphosphate + dimethylallyl diphosphate = (2E)-geranyl diphosphate + diphosphate. It carries out the reaction isopentenyl diphosphate + (2E)-geranyl diphosphate = (2E,6E)-farnesyl diphosphate + diphosphate. The enzyme catalyses isopentenyl diphosphate + (2E,6E)-farnesyl diphosphate = (2E,6E,10E)-geranylgeranyl diphosphate + diphosphate. It participates in secondary metabolite biosynthesis. Catalyzes the trans-addition of the 3 molecules of isopentenyl diphosphate (IPP) onto dimethylallyl diphosphate (DMAPP) to form geranylgeranyl pyrophosphate (GGPP). GGPP is a precursor for the biosynthesis of many secondary metabolites, including the indole diterpenes nodulisporic acids (NA). The sequence is that of Geranylgeranyl pyrophosphate synthase from Hypoxylon pulicicidum.